We begin with the raw amino-acid sequence, 489 residues long: Virion host shutoff protein (489 aa).

Disordered stretches follow at residues Glu-110 to Asn-135, Ser-142 to Ala-161, Arg-285 to Val-319, and Gly-332 to Pro-364. Residues Ile-124–Ser-134 show a composition bias toward polar residues.

It belongs to the herpesviridae VHS protein family. In terms of assembly, interacts with human EIF4H, EIF4A1 and EIF4A2; interaction with eIF4AI and EIF4A2 presumably allows Vhs protein to associate with the eIF4F cap-binding complex.

It localises to the virion. Minor structural protein that acts as an endoribonuclease during lytic infection. Degrades host mRNAs in the cytoplasm by cutting them at preferred sites, including some in regions of translation initiation. Together with inhibition of host splicing by ICP27, contributes to an overall decrease in host protein synthesis. Also, after the onset of viral transcription, accelerates the turnover of viral mRNA, thereby facilitating the sequential expression of different classes of viral genes. Binds translation initiation factors eIF4H, eIF4AI, and eIF4AII, thereby may interact directly with the translation initiation complex and thus digest specifically mRNAs. Also impedes antigen presentation by major histocompatibility complex class I and class II molecules, inhibits secretion of cytokines that would otherwise recruit lymphocytes and neutrophils cells to the site of infection and blocks the activation of dendritic cells. Plays a role in the inhibition of interferon-beta activation by the cGAS/STING pathway. Mechanistically, down-regulates the expression of host cGAS/MB21D1. Also decreases the accumulation of other interferon-induced mRNAs such as host IFIT3 or CH25H to subvert their antiviral activity. The sequence is that of Virion host shutoff protein (UL41) from Human herpesvirus 1 (strain 17) (HHV-1).